The sequence spans 167 residues: uncharacterized protein (167 aa).

This is an uncharacterized protein from Xenopus laevis (African clawed frog).